The primary structure comprises 347 residues: MTEMSFLNSEVLAGDLMSPFDQSGLGAEESLGLLDDYLEVAKHFKPHGFSSDKAGSSEWLAMDGLVSASDTGKEDAFSGTDWMLEKMDLKEFDFDALFRMDDLETMPDELLATLDDTCDLFAPLVQETNKEPPQTVNPIGHLPESVIKVDQAAPFTFLQPLPCSPGFLSSTPDHSFSLELGSEVDISEGDRKPDSAAYITLTPQCVKEEDTPSDSDSGICMSPESYLGSPQHSPSTSRAPPDSLPSPGVPRGSRPKPYDPPGVSVTAKVKTEKLDKKLKKMEQNKTAATRYRQKKRAEQEALTGECKELEKKNEALKEKADSLAKEIQYLKDLIEEVRKARGKKRVP.

Residues 202–296 (TPQCVKEEDT…AATRYRQKKR (95 aa)) are disordered. Thr-211 bears the Phosphothreonine mark. A phosphoserine mark is found at Ser-213, Ser-217, Ser-222, Ser-229, and Ser-233. The BetaTrCP degron motif motif lies at 213–222 (SDSDSGICMS). Polar residues predominate over residues 228 to 238 (GSPQHSPSTSR). Pro-234 carries the post-translational modification 4-hydroxyproline. Phosphoserine occurs at positions 243 and 246. Residues Lys-256 and Lys-268 each participate in a glycyl lysine isopeptide (Lys-Gly) (interchain with G-Cter in SUMO2) cross-link. Basic and acidic residues predominate over residues 269–283 (VKTEKLDKKLKKMEQ). In terms of domain architecture, bZIP spans 274–337 (LDKKLKKMEQ…QYLKDLIEEV (64 aa)). Residues 276–296 (KKLKKMEQNKTAATRYRQKKR) form a basic motif region. The tract at residues 301 to 337 (ALTGECKELEKKNEALKEKADSLAKEIQYLKDLIEEV) is interaction with GABBR1. The leucine-zipper stretch occupies residues 302-330 (LTGECKELEKKNEALKEKADSLAKEIQYL). Residue Lys-307 is modified to N6-acetyllysine.

This sequence belongs to the bZIP family. As to quaternary structure, binds DNA as a homodimer and as a heterodimer. Heterodimer; heterodimerizes with CEBPB. Heterodimer; heterodimerizes with DDIT3/CHOP. Interacts with CEP290 (via an N-terminal region). Interacts with NEK6, DAPK2 (isoform 2) and ZIPK/DAPK3. Interacts (via its leucine zipper domain) with GABBR1 and GABBR2 (via their C-termini). Forms a heterodimer with TXLNG in osteoblasts. Interacts (via its DNA binding domain) with FOXO1 (C-terminal half); the interaction occurs in osteoblasts and regulates glucose homeostasis through suppression of beta-cell proliferation and a decrease in insulin production. Interacts with SATB2; the interaction results in enhanced DNA binding and transactivation by these transcription factors. Interacts with ABRAXAS2. Interacts with TRIB3, inhibiting the transactivation activity of ATF4. Interacts with DISC1; which inhibits ATF4 transcription factor activity by disrupting ATF4 dimerization and DNA-binding. Interacts with EP300/p300; EP300/p300 stabilizes ATF4 and increases its transcriptional activity independently of its catalytic activity by preventing its ubiquitination. In terms of processing, ubiquitinated by SCF(BTRC) in response to mTORC1 signal, followed by proteasomal degradation and leading to down-regulate expression of SIRT4. Interaction with EP300/p300 inhibits ubiquitination by SCF(BTRC). Phosphorylation at Ser-243 by RPS6KA3/RSK2 in osteoblasts enhances transactivation activity and promotes osteoblast differentiation. Phosphorylated on the betaTrCP degron motif at Ser-217, followed by phosphorylation at Thr-211, Ser-222, Ser-229, Ser-233 and Ser-246, promoting interaction with BTRC and ubiquitination. Phosphorylation is promoted by mTORC1. Phosphorylation at Ser-213 by CK2 decreases its stability. Phosphorylated by NEK6. Post-translationally, hydroxylated by PHD3, leading to decreased protein stability. In terms of tissue distribution, expressed in brain, heart, liver, spleen, lung and muscle, but not testis.

The protein localises to the nucleus. The protein resides in the nucleus speckle. It localises to the cytoplasm. It is found in the cell membrane. Its subcellular location is the cytoskeleton. The protein localises to the microtubule organizing center. The protein resides in the centrosome. Functionally, transcription factor that binds the cAMP response element (CRE) (consensus: 5'-GTGACGT[AC][AG]-3') and displays two biological functions, as regulator of metabolic and redox processes under normal cellular conditions, and as master transcription factor during integrated stress response (ISR). Binds to asymmetric CRE's as a heterodimer and to palindromic CRE's as a homodimer. Core effector of the ISR, which is required for adaptation to various stress such as endoplasmic reticulum (ER) stress, amino acid starvation, mitochondrial stress or oxidative stress. During ISR, ATF4 translation is induced via an alternative ribosome translation re-initiation mechanism in response to EIF2S1/eIF-2-alpha phosphorylation, and stress-induced ATF4 acts as a master transcription factor of stress-responsive genes in order to promote cell recovery. Promotes the transcription of genes linked to amino acid sufficiency and resistance to oxidative stress to protect cells against metabolic consequences of ER oxidation. Activates the transcription of NLRP1, possibly in concert with other factors in response to ER stress. Activates the transcription of asparagine synthetase (ASNS) in response to amino acid deprivation or ER stress. However, when associated with DDIT3/CHOP, the transcriptional activation of the ASNS gene is inhibited in response to amino acid deprivation. Together with DDIT3/CHOP, mediates programmed cell death by promoting the expression of genes involved in cellular amino acid metabolic processes, mRNA translation and the terminal unfolded protein response (terminal UPR), a cellular response that elicits programmed cell death when ER stress is prolonged and unresolved. Activates the expression of COX7A2L/SCAF1 downstream of the EIF2AK3/PERK-mediated unfolded protein response, thereby promoting formation of respiratory chain supercomplexes and increasing mitochondrial oxidative phosphorylation. Together with DDIT3/CHOP, activates the transcription of the IRS-regulator TRIB3 and promotes ER stress-induced neuronal cell death by regulating the expression of BBC3/PUMA in response to ER stress. May cooperate with the UPR transcriptional regulator QRICH1 to regulate ER protein homeostasis which is critical for cell viability in response to ER stress. In the absence of stress, ATF4 translation is at low levels and it is required for normal metabolic processes such as embryonic lens formation, fetal liver hematopoiesis, bone development and synaptic plasticity. Acts as a regulator of osteoblast differentiation in response to phosphorylation by RPS6KA3/RSK2: phosphorylation in osteoblasts enhances transactivation activity and promotes expression of osteoblast-specific genes and post-transcriptionally regulates the synthesis of Type I collagen, the main constituent of the bone matrix. Cooperates with FOXO1 in osteoblasts to regulate glucose homeostasis through suppression of beta-cell production and decrease in insulin production. Activates transcription of SIRT4. Regulates the circadian expression of the core clock component PER2 and the serotonin transporter SLC6A4. Binds in a circadian time-dependent manner to the cAMP response elements (CRE) in the SLC6A4 and PER2 promoters and periodically activates the transcription of these genes. Mainly acts as a transcriptional activator in cellular stress adaptation, but it can also act as a transcriptional repressor: acts as a regulator of synaptic plasticity by repressing transcription, thereby inhibiting induction and maintenance of long-term memory. Regulates synaptic functions via interaction with DISC1 in neurons, which inhibits ATF4 transcription factor activity by disrupting ATF4 dimerization and DNA-binding. The protein is Cyclic AMP-dependent transcription factor ATF-4 of Rattus norvegicus (Rat).